Here is a 338-residue protein sequence, read N- to C-terminus: Terpene synthase 1 (338 aa).

Positions 80–85 (DDALDS) match the DDxx(x)D/E motif motif. The short motif at 220–228 (NDLVSYEKE) is the NDxxSxxxD/E motif element.

The protein belongs to the terpene synthase family.

It carries out the reaction (2E,6E)-farnesyl diphosphate = (2S,3R,6S,9S)-(-)-protoillud-7-ene + diphosphate. Terpene synthase that converts its substrate farnesyl diphosphate (FPP) into the sesquiterpene protoillud-7-ene. The polypeptide is Terpene synthase 1 (Cavenderia fasciculata (Slime mold)).